The chain runs to 570 residues: Protein misato homolog 1 (570 aa).

S495 carries the post-translational modification Phosphoserine.

Belongs to the misato family.

It localises to the mitochondrion outer membrane. Its subcellular location is the cytoplasm. Involved in the regulation of mitochondrial distribution and morphology. Required for mitochondrial fusion and mitochondrial network formation. This Pongo pygmaeus (Bornean orangutan) protein is Protein misato homolog 1 (MSTO1).